We begin with the raw amino-acid sequence, 718 residues long: Heat shock 70 kDa protein 7, chloroplastic (718 aa).

The transit peptide at 1–92 (MASSAAQIHI…IDLGTTNSAV (92 aa)) directs the protein to the chloroplast. Residues 668 to 678 (QIGQSLYNQPQ) are compositionally biased toward polar residues. Residues 668 to 718 (QIGQSLYNQPQPGGADSPPGGEASSSSDTSSSAKGGDNGGDVIDADFTDSN) are disordered.

This sequence belongs to the heat shock protein 70 (TC 1.A.33) family. DnaK subfamily.

The protein localises to the plastid. It is found in the chloroplast stroma. Its function is as follows. Acts redundantly with HSP70-6 in the thermotolerance of germinating seeds. Plays an important role in the protein precursor import into chloroplasts. In terms of biological role, in cooperation with other chaperones, Hsp70s are key components that facilitate folding of de novo synthesized proteins, assist translocation of precursor proteins into organelles, and are responsible for degradation of damaged protein under stress conditions. This Arabidopsis thaliana (Mouse-ear cress) protein is Heat shock 70 kDa protein 7, chloroplastic (HSP70-7).